A 328-amino-acid chain; its full sequence is Phosphatidylglycerol--prolipoprotein diacylglyceryl transferase (328 aa).

The next 3 helical transmembrane spans lie at 15–35 (VIQG…ILIS), 58–78 (FMFS…TLVY), and 106–126 (GMAI…IINT). An a 1,2-diacyl-sn-glycero-3-phospho-(1'-sn-glycerol)-binding site is contributed by Arg-156. The next 2 helical transmembrane spans lie at 242-262 (GFIF…IEYL) and 289-309 (ISMG…WVVV).

It belongs to the Lgt family.

The protein localises to the cell inner membrane. The catalysed reaction is L-cysteinyl-[prolipoprotein] + a 1,2-diacyl-sn-glycero-3-phospho-(1'-sn-glycerol) = an S-1,2-diacyl-sn-glyceryl-L-cysteinyl-[prolipoprotein] + sn-glycerol 1-phosphate + H(+). Its pathway is protein modification; lipoprotein biosynthesis (diacylglyceryl transfer). Catalyzes the transfer of the diacylglyceryl group from phosphatidylglycerol to the sulfhydryl group of the N-terminal cysteine of a prolipoprotein, the first step in the formation of mature lipoproteins. The chain is Phosphatidylglycerol--prolipoprotein diacylglyceryl transferase from Borrelia garinii subsp. bavariensis (strain ATCC BAA-2496 / DSM 23469 / PBi) (Borreliella bavariensis).